A 475-amino-acid chain; its full sequence is Ribulose bisphosphate carboxylase large chain (475 aa).

The propeptide occupies 1 to 2; sequence MS. An N-acetylproline modification is found at proline 3. An N6,N6,N6-trimethyllysine modification is found at lysine 14. Substrate contacts are provided by asparagine 123 and threonine 173. The Proton acceptor role is filled by lysine 175. Substrate is bound at residue lysine 177. Positions 201, 203, and 204 each coordinate Mg(2+). Lysine 201 carries the post-translational modification N6-carboxylysine. The Proton acceptor role is filled by histidine 294. Substrate-binding residues include arginine 295, histidine 327, and serine 379.

Belongs to the RuBisCO large chain family. Type I subfamily. Heterohexadecamer of 8 large chains and 8 small chains; disulfide-linked. The disulfide link is formed within the large subunit homodimers. Mg(2+) serves as cofactor. The disulfide bond which can form in the large chain dimeric partners within the hexadecamer appears to be associated with oxidative stress and protein turnover.

It localises to the plastid. It is found in the chloroplast. It catalyses the reaction 2 (2R)-3-phosphoglycerate + 2 H(+) = D-ribulose 1,5-bisphosphate + CO2 + H2O. It carries out the reaction D-ribulose 1,5-bisphosphate + O2 = 2-phosphoglycolate + (2R)-3-phosphoglycerate + 2 H(+). RuBisCO catalyzes two reactions: the carboxylation of D-ribulose 1,5-bisphosphate, the primary event in carbon dioxide fixation, as well as the oxidative fragmentation of the pentose substrate in the photorespiration process. Both reactions occur simultaneously and in competition at the same active site. This chain is Ribulose bisphosphate carboxylase large chain, found in Populus trichocarpa (Western balsam poplar).